We begin with the raw amino-acid sequence, 205 residues long: ATP phosphoribosyltransferase (205 aa).

The protein belongs to the ATP phosphoribosyltransferase family. Short subfamily. Heteromultimer composed of HisG and HisZ subunits.

It localises to the cytoplasm. It carries out the reaction 1-(5-phospho-beta-D-ribosyl)-ATP + diphosphate = 5-phospho-alpha-D-ribose 1-diphosphate + ATP. It participates in amino-acid biosynthesis; L-histidine biosynthesis; L-histidine from 5-phospho-alpha-D-ribose 1-diphosphate: step 1/9. Its function is as follows. Catalyzes the condensation of ATP and 5-phosphoribose 1-diphosphate to form N'-(5'-phosphoribosyl)-ATP (PR-ATP). Has a crucial role in the pathway because the rate of histidine biosynthesis seems to be controlled primarily by regulation of HisG enzymatic activity. This is ATP phosphoribosyltransferase from Leptospira borgpetersenii serovar Hardjo-bovis (strain JB197).